We begin with the raw amino-acid sequence, 121 residues long: Flagellar protein FliT (121 aa).

The required for homodimerization stretch occupies residues 1–50; sequence MNNAPHLYFAWQQLVEKSQLMLRLATEEQWDELITSEMAYVNAVQEIAHL. Residues 60–98 form a fliD binding region; that stretch reads MQEQLRPMLRLILDNESKVKQLLQIRMDELAKLVGQSSV.

Belongs to the FliT family. In terms of assembly, homodimer. Interacts with FliD and FlhC.

Its subcellular location is the cytoplasm. The protein resides in the cytosol. Its function is as follows. Dual-function protein that regulates the transcription of class 2 flagellar operons and that also acts as an export chaperone for the filament-capping protein FliD. As a transcriptional regulator, acts as an anti-FlhDC factor; it directly binds FlhC, thus inhibiting the binding of the FlhC/FlhD complex to class 2 promoters, resulting in decreased expression of class 2 flagellar operons. As a chaperone, effects FliD transition to the membrane by preventing its premature polymerization, and by directing it to the export apparatus. The protein is Flagellar protein FliT of Escherichia coli (strain 55989 / EAEC).